Reading from the N-terminus, the 167-residue chain is 16S rRNA aminocarboxypropyltransferase (167 aa).

Positions 17, 62, 84, 99, and 103 each coordinate S-adenosyl-L-methionine.

This sequence belongs to the TDD superfamily. TSR3 family.

Its subcellular location is the cytoplasm. It carries out the reaction an N(1)-methylpseudouridine in rRNA + S-adenosyl-L-methionine = N(1)-methyl-N(3)-[(3S)-3-amino-3-carboxypropyl]pseudouridine in rRNA + S-methyl-5'-thioadenosine + H(+). Functionally, aminocarboxypropyltransferase that catalyzes the aminocarboxypropyl transfer on pseudouridine corresponding to position 914 in M.jannaschii 16S rRNA. It constitutes the last step in biosynthesis of the hypermodified N1-methyl-N3-(3-amino-3-carboxypropyl) pseudouridine (m1acp3-Psi). This chain is 16S rRNA aminocarboxypropyltransferase, found in Sulfurisphaera tokodaii (strain DSM 16993 / JCM 10545 / NBRC 100140 / 7) (Sulfolobus tokodaii).